A 779-amino-acid chain; its full sequence is Phosphoribosylformylglycinamidine synthase subunit PurL (779 aa).

His-52 is a catalytic residue. Tyr-55 and Lys-94 together coordinate ATP. Residue Glu-96 participates in Mg(2+) binding. Substrate-binding positions include 97 to 100 (SHNH) and Arg-119. The active-site Proton acceptor is His-98. Asp-120 contacts Mg(2+). Position 243 (Gln-243) interacts with substrate. Residue Asp-271 coordinates Mg(2+). 315 to 317 (ESQ) is a substrate binding site. ATP contacts are provided by Asn-523 and Gly-560. Asn-561 contacts Mg(2+). Residue Ser-563 coordinates substrate.

The protein belongs to the FGAMS family. As to quaternary structure, monomer. Part of the FGAM synthase complex composed of 1 PurL, 1 PurQ and 2 PurS subunits.

It is found in the cytoplasm. The enzyme catalyses N(2)-formyl-N(1)-(5-phospho-beta-D-ribosyl)glycinamide + L-glutamine + ATP + H2O = 2-formamido-N(1)-(5-O-phospho-beta-D-ribosyl)acetamidine + L-glutamate + ADP + phosphate + H(+). Its pathway is purine metabolism; IMP biosynthesis via de novo pathway; 5-amino-1-(5-phospho-D-ribosyl)imidazole from N(2)-formyl-N(1)-(5-phospho-D-ribosyl)glycinamide: step 1/2. Functionally, part of the phosphoribosylformylglycinamidine synthase complex involved in the purines biosynthetic pathway. Catalyzes the ATP-dependent conversion of formylglycinamide ribonucleotide (FGAR) and glutamine to yield formylglycinamidine ribonucleotide (FGAM) and glutamate. The FGAM synthase complex is composed of three subunits. PurQ produces an ammonia molecule by converting glutamine to glutamate. PurL transfers the ammonia molecule to FGAR to form FGAM in an ATP-dependent manner. PurS interacts with PurQ and PurL and is thought to assist in the transfer of the ammonia molecule from PurQ to PurL. This chain is Phosphoribosylformylglycinamidine synthase subunit PurL, found in Prochlorococcus marinus subsp. pastoris (strain CCMP1986 / NIES-2087 / MED4).